The following is a 696-amino-acid chain: MANLASLLRLPGNWKSSQWQILAGPVLILLILSMMVLPLPPFLLDLLFTFNIALSIMVLLVAMFTRRTLDFAAFPTILLFTTLLRLSLNVASTRIILMEGHTGSAAAGRVVEAFGHFLVGGNFAIGIVVFIILILINFMVITKGAGRIAEVGARFVLDGMPGKQMAIDADLNAGIINEEEAKKRRKEVSLESDFYGSMDGASKFVRGDAIAGLMILVINVVGGLVVGVAQHNMALNDAASTYTLLTIGDGLVAQIPALIISTAAGVIVTRVATDEDVGQQMVTQLFDNPRVLMLTAGVLGLLGLVPGMPNFVFLFFTAALAGLGWYILKRHSSPQVQQQKELEQVEKQNRVVEASWEDVQLEDPLSMEVGYRLIPMVDNRQNGELLGRISGIRKKFAQEMGYLPPVVHIRDNMEVKPSSYRILMKGVEIGHGEAHPGRWLAINPGNAVGTLEGDNTQEPAFGLPAVWIDDSLREQAQVQGYTVVAASTVIATHFNHVLNQYAAELFGRQEAQMLFDRVSKELPKMTENMIPDMLSLTVLHKVLQNLLAEQVPIRDMRTILEALAEHAPEQKDPAELTAVVRVALRRAITQHWFGDKEEIQVIGLDAGLERLLLQAMQSGGGLEPGLAENIEQQALDAVRRQEMSGGVPVLLVNHALRSLLSRFLRRSLPQLAVLSNMEISEGRHIRMTSMIGGQNN.

The next 8 helical transmembrane spans lie at 24-44 (GPVL…PFLL), 45-65 (DLLF…AMFT), 71-91 (FAAF…LNVA), 121-141 (GNFA…FMVI), 209-229 (AIAG…VGVA), 247-267 (IGDG…AGVI), 296-316 (AGVL…FLFF), and 478-498 (VQGY…NHVL).

It belongs to the FHIPEP (flagella/HR/invasion proteins export pore) family.

Its subcellular location is the cell inner membrane. Its function is as follows. Required for formation of the rod structure of the flagellar apparatus. Together with FliI and FliH, may constitute the export apparatus of flagellin. The chain is Flagellar biosynthesis protein FlhA (flhA) from Proteus mirabilis.